The sequence spans 574 residues: E3 ubiquitin-protein ligase TRIM23 (574 aa).

The segment at 31–76 adopts an RING-type; degenerate zinc-finger fold; the sequence is CGVCEDVFSLQGDKVPRLLLCGHTVCHDCLTRLPLHGRAIRCPFDR. The B box-type; degenerate zinc finger occupies 122–168; the sequence is ESIIRCDEDEAHLASVYCTVCATHLCSECSQVTHSTKTLAKHRRVPL. Residues 352-379 are a coiled coil; that stretch reads RVVLAKQEITRLLETLQKQQQQFTEVAD. The segment at 390-574 is ARF-like; sequence TFTKDNRVHI…LVAAGVLDVA (185 aa). GTP-binding positions include 411–418, 454–458, and 513–516; these read GLDGAGKT, DVGGK, and NKQD.

It in the C-terminal section; belongs to the small GTPase superfamily. Arf family. As to quaternary structure, homodimer. Interacts with PSCD1. Interacts with UBE2D2. Interacts with TBK1 (via N-terminal kinase domain) and p62/SQSTM1. (Microbial infection) Interacts with human cytomegalovirus protein UL144; this interaction might cause autoubiquitination of TRAF6, leading to NF-kappa-B activation.

It localises to the cytoplasm. Its subcellular location is the endomembrane system. The protein localises to the golgi apparatus membrane. It is found in the lysosome membrane. The catalysed reaction is S-ubiquitinyl-[E2 ubiquitin-conjugating enzyme]-L-cysteine + [acceptor protein]-L-lysine = [E2 ubiquitin-conjugating enzyme]-L-cysteine + N(6)-ubiquitinyl-[acceptor protein]-L-lysine.. The protein operates within protein modification; protein ubiquitination. In terms of biological role, acts as an E3 ubiquitin-protein ligase. Plays an essential role in autophagy activation during viral infection. Mechanistically, activates TANK-binding kinase 1/TBK1 by facilitating its dimerization and ability to phosphorylate the selective autophagy receptor SQSTM1. In order to achieve this function, TRIM23 mediates 'Lys-27'-linked auto-ubiquitination of its ADP-ribosylation factor (ARF) domain to induce its GTPase activity and its recruitment to autophagosomes. Functionally, (Microbial infection) Mediates TRAF6 auto-ubiquitination in the presence of human cytomegalovirus protein UL144, resulting in the virally controlled activation of NF-kappa-B stimulation at early times of HCMV infection. The protein is E3 ubiquitin-protein ligase TRIM23 (TRIM23) of Homo sapiens (Human).